The chain runs to 663 residues: MHHPGPPRFVATGDEVELAPRDPDPTATYTWRLTQAPAQSTVSLGDDPVEHFVPDAPGRYVVRLTAPDGEHDLTVRAFPGTLESSGTHTSGRSGGHSGGVSGGRSGPGRSGSGEYTQAGDGSDGGGGGQPRLTLRPDIEGDEAVVRADCSPHPEGTETAADLAVEFLLDDRDDVDADAVTRDGTALRIPLDALPERARIHAVAVGNHGYSVPDAVEFTRGGDGVETVTSGAGVAARRPYDAPAWAEDSVIYEIYVRTFAGERDESPFDAITDRLDYLDSLGVDAIWLTPVLQNDHAPHGYNITDFFEIASDLGTRADYERFIEAAHDRGFKVLFDLVCNHSARTHPYFESAVEGPDADYREWYEWRSDTEPETYFEWEHIANFNFDHLPVRRHLLDAVAQWADLVDGFRCDMAWAVPNGFWREIHDYCKDRDSEFLLLDETIPYIPDFQAGLFDMHFDSTTYAALRQVGGGGDAEAILGAIEGRAEIGFPEHASFMLYAENHDETRYIVDYGREAAEAAAGALFTLPGAPLLYAGQEFGQRGRRDDLAWDHADETLQSFVSDLASARHDQPALSADADLVRIPYEVRDGPSDRVVAYARTTENDAAVVVLNFGSEPTTVGLPAGTDGTDLVSGEYRGAAGDGDATVTVDSVSVFPADENDLRQ.

Disordered regions lie at residues 1–28 (MHHP…PTAT) and 80–135 (GTLE…LTLR). A compositionally biased stretch (gly residues) spans 92 to 111 (RSGGHSGGVSGGRSGPGRSG). Catalysis depends on D411, which acts as the Nucleophile. E440 acts as the Proton donor in catalysis.

This sequence belongs to the glycosyl hydrolase 13 family.

Its subcellular location is the cytoplasm. It catalyses the reaction Endohydrolysis of (1-&gt;4)-alpha-D-glucosidic linkages in polysaccharides containing three or more (1-&gt;4)-alpha-linked D-glucose units.. Its pathway is glycan degradation; starch degradation. Its activity is regulated as follows. Stable and active over a broad range of NaCl concentrations (0.5 to 4.2 M NaCl), with maximal activity at 2.6 M NaCl. 83% and 94% of the maximum activity at 0.6 and 4.2 M NaCl, respectively. Active and stable also in KCl. Alpha-amylase that cleaves starch into oligosaccharides, the first step in starch degradation. Endo-acting enzyme which prefers a linear polysaccharide to branched polysaccharides hydrolyzing alpha-1,4 glucosidic bonds efficiently. Also has transglycosylation activity, but does not act on alpha-1,6 bonds. Higher activities of 100%, 79% and 67.8% against amylose, soluble starch and amylopectin, respectively. Lower activity of 22% against glycogen and faint or no activity against alpha-, beta- and gamma-cyclodextrin. This is Alpha-amylase MalA from Haloarcula japonica (strain ATCC 49778 / DSM 6131 / JCM 7785 / NBRC 101032 / NCIMB 13157 / TR-1).